Reading from the N-terminus, the 506-residue chain is Exopolysaccharide phosphotransferase NFA_48680 (506 aa).

The disordered stretch occupies residues 484 to 506; it reads PAPWERVSAPSRRPLPESTAGAA.

The protein belongs to the stealth family.

The polypeptide is Exopolysaccharide phosphotransferase NFA_48680 (Nocardia farcinica (strain IFM 10152)).